We begin with the raw amino-acid sequence, 640 residues long: MPAITLPDGSVKAFDHPVTTREIAESIGRKLAKDAIVGRVDGELIDLDRPIEHDAYVEIVTSNDPDGLEVIRHSTAHLMAQAVKQLHPEMQVTIGPTVDNGFYYDFAGERSLSEDELETIEQRMSELAEADHPVEREVWDREAARQFFLEQGETYKAQIIDDLPESETITVYRQGDFADLCRGPHVPSTGKLKAFKLTKVAGAYWRGDQNNEMLQRVYGTAWPDRKQLKAYLDRLAEAERRDHRRLGRTQDLFHVQEESPGMVFWHPRGWRLYLEVQDYIRRLMRDNGYQEIHTPMLVDRSLWERSGHWAMFAENMFVTESESRDYAVKPMNCPCHVEVFKQGLKSYRDLPLRLAEFGSCHRNEPSGTLHGLMRVRGFVQDDAHIFCTENQIQEEVRTFIDLVYRAYRDFGFEDVLIALSTRPDERVGDDALWDKAESALATALETHGLDYTLQPGEGAFYGPKIEFSLRDCLERVWQLGTIQVDFSMPGRLGAQFVDDDGERRTPVMLHRAILGSLERFIGILIEHYGGALPTWLAPVQAVVLNITDRQADYARSVEQQLLESGFRAEADLRNEKIGYKIREHTLQKVPYMLVLGDRELESGTVAVRHRDGTDLGSMELEELVARLSNDIAGHEREQED.

In terms of domain architecture, TGS spans 1 to 61 (MPAITLPDGS…EHDAYVEIVT (61 aa)). The tract at residues 242–533 (DHRRLGRTQD…LIEHYGGALP (292 aa)) is catalytic. 3 residues coordinate Zn(2+): Cys333, His384, and His510.

This sequence belongs to the class-II aminoacyl-tRNA synthetase family. As to quaternary structure, homodimer. It depends on Zn(2+) as a cofactor.

It localises to the cytoplasm. It carries out the reaction tRNA(Thr) + L-threonine + ATP = L-threonyl-tRNA(Thr) + AMP + diphosphate + H(+). Catalyzes the attachment of threonine to tRNA(Thr) in a two-step reaction: L-threonine is first activated by ATP to form Thr-AMP and then transferred to the acceptor end of tRNA(Thr). Also edits incorrectly charged L-seryl-tRNA(Thr). The polypeptide is Threonine--tRNA ligase (Halorhodospira halophila (strain DSM 244 / SL1) (Ectothiorhodospira halophila (strain DSM 244 / SL1))).